Consider the following 72-residue polypeptide: Translation initiation factor IF-1 (72 aa).

Residues 1–72 (MAKEDCIEMQ…SKARIIFRAR (72 aa)) enclose the S1-like domain.

Belongs to the IF-1 family. As to quaternary structure, component of the 30S ribosomal translation pre-initiation complex which assembles on the 30S ribosome in the order IF-2 and IF-3, IF-1 and N-formylmethionyl-tRNA(fMet); mRNA recruitment can occur at any time during PIC assembly.

The protein resides in the cytoplasm. One of the essential components for the initiation of protein synthesis. Stabilizes the binding of IF-2 and IF-3 on the 30S subunit to which N-formylmethionyl-tRNA(fMet) subsequently binds. Helps modulate mRNA selection, yielding the 30S pre-initiation complex (PIC). Upon addition of the 50S ribosomal subunit IF-1, IF-2 and IF-3 are released leaving the mature 70S translation initiation complex. This is Translation initiation factor IF-1 from Haemophilus ducreyi (strain 35000HP / ATCC 700724).